We begin with the raw amino-acid sequence, 517 residues long: Putative pumilio homolog 21 (517 aa).

4 disordered regions span residues 33–57, 69–94, 107–130, and 175–201; these read NHQE…PPLL, KNNQ…PPLV, NHQE…PLLT, and FTPS…PPLS. Over residues 42-51 the composition is skewed to low complexity; that stretch reads NTNINSNNNH. Over residues 69–84 the composition is skewed to polar residues; it reads KNNQEPGESGNTTINR. Positions 148–502 constitute a PUM-HD domain; it reads ESSNNNYPNL…NTLRVIQEEI (355 aa). Residues 177–190 show a composition bias toward polar residues; the sequence is PSSLTQPDDSSSRY. The Pumilio 1; degenerate repeat unit spans residues 258–293; the sequence is TTKRIFLHLATNQYGSQALRILFRRSPSLDHLLFCA. A Pumilio 2 repeat occupies 294-328; that stretch reads VDTNFFLLMSDKYGRGLIIPAIRAVDKTKKESLYK. The Pumilio 3; degenerate repeat unit spans residues 329-363; sequence LTYEYTLHLARLETGCLALNNVLQEIRGIYRDLIF. 3 Pumilio repeats span residues 364-400, 401-437, and 438-473; these read ECVA…AIAE, RLRG…EEFR, and GNAK…PLLR.

It is found in the cytoplasm. Functionally, sequence-specific RNA-binding protein that regulates translation and mRNA stability by binding the 3'-UTR of target mRNAs. This chain is Putative pumilio homolog 21 (APUM21), found in Arabidopsis thaliana (Mouse-ear cress).